The primary structure comprises 319 residues: MNPNYLDFEQPIADLEAKIQDLRTASAGPSVNVDIEVRALENKLRLRTAQIFRNLSAWQISQLARHPRRPYTLDYISIVCDEFQELAGDRTLADDKAIVGGLARIGHRPVMLIGHQKGRDNKERLMRNFGMPKPEGYRKALRLMKLAERFGLPLLTFIDTMGAWPGIDAEERNQSEAIATNLIEMAELKIPVICTVIGEGGSGGALAIGIGDRTLMLEYSTYSVITPEGCASILWKDAAKASDAAEQLNLTARRLKEFGLIDKVIREPIGGAHRNPQQMANRLKAVLLNELEALDKVPLVTLLNQRHKRLRTYGAYENH.

A CoA carboxyltransferase C-terminal domain is found at 32-293; it reads NVDIEVRALE…KAVLLNELEA (262 aa).

The protein belongs to the AccA family. In terms of assembly, acetyl-CoA carboxylase is a heterohexamer composed of biotin carboxyl carrier protein (AccB), biotin carboxylase (AccC) and two subunits each of ACCase subunit alpha (AccA) and ACCase subunit beta (AccD).

The protein localises to the cytoplasm. It catalyses the reaction N(6)-carboxybiotinyl-L-lysyl-[protein] + acetyl-CoA = N(6)-biotinyl-L-lysyl-[protein] + malonyl-CoA. It functions in the pathway lipid metabolism; malonyl-CoA biosynthesis; malonyl-CoA from acetyl-CoA: step 1/1. In terms of biological role, component of the acetyl coenzyme A carboxylase (ACC) complex. First, biotin carboxylase catalyzes the carboxylation of biotin on its carrier protein (BCCP) and then the CO(2) group is transferred by the carboxyltransferase to acetyl-CoA to form malonyl-CoA. The chain is Acetyl-coenzyme A carboxylase carboxyl transferase subunit alpha from Xylella fastidiosa (strain Temecula1 / ATCC 700964).